The primary structure comprises 586 residues: Aspartate--tRNA ligase (586 aa).

Glu171 lines the L-aspartate pocket. Residues 195–198 (QLFK) form an aspartate region. Arg217 contacts L-aspartate. Residues 217-219 (RDE) and Gln226 contribute to the ATP site. His448 contributes to the L-aspartate binding site. Position 482 (Glu482) interacts with ATP. Arg489 provides a ligand contact to L-aspartate. Residue 534 to 537 (GLDR) coordinates ATP.

This sequence belongs to the class-II aminoacyl-tRNA synthetase family. Type 1 subfamily. In terms of assembly, homodimer.

It localises to the cytoplasm. It catalyses the reaction tRNA(Asp) + L-aspartate + ATP = L-aspartyl-tRNA(Asp) + AMP + diphosphate. Functionally, catalyzes the attachment of L-aspartate to tRNA(Asp) in a two-step reaction: L-aspartate is first activated by ATP to form Asp-AMP and then transferred to the acceptor end of tRNA(Asp). In Buchnera aphidicola subsp. Acyrthosiphon pisum (strain APS) (Acyrthosiphon pisum symbiotic bacterium), this protein is Aspartate--tRNA ligase.